We begin with the raw amino-acid sequence, 260 residues long: Vesicle-associated membrane protein/synaptobrevin-binding protein (260 aa).

The Cytoplasmic segment spans residues 1–238 (MASHEQALIL…SPAPAAAVRA (238 aa)). The region spanning 7 to 125 (ALILEPAGEL…MDTKLRCVFE (119 aa)) is the MSP domain. The segment at 127 to 177 (PDGSHQAPASDASRATDAGAHFSESALEDPTVASRKTETQSPKRVGAVGSA) is disordered. The stretch at 172-216 (GAVGSAGEDVKKLQHELKKAQSEITSLKGENSQLKDEGIRLRKVA) forms a coiled coil. A helical; Anchor for type IV membrane protein membrane pass occupies residues 239–259 (FPPVVYVVAAIILGLIIGKFL).

It belongs to the VAMP-associated protein (VAP) (TC 9.B.17) family. Detected only in the central nervous system and the gill of aplysia.

It localises to the membrane. It is found in the synapse. The protein resides in the synaptosome. Required for neurotransmitter release. Interacts with VAMP. The chain is Vesicle-associated membrane protein/synaptobrevin-binding protein from Aplysia californica (California sea hare).